The sequence spans 729 residues: Fatty acid oxidation complex subunit alpha (729 aa).

Residues 1–189 (MLYQGESLYL…KVGLVQAVVA (189 aa)) form an enoyl-CoA hydratase/isomerase region. Residue Asp-296 coordinates substrate. Positions 311–729 (PVPQQAAVLG…HADVSHGQPA (419 aa)) are 3-hydroxyacyl-CoA dehydrogenase. NAD(+) is bound by residues Met-324, Asp-343, 400-402 (VVE), Lys-407, and Ser-429. The For 3-hydroxyacyl-CoA dehydrogenase activity role is filled by His-450. Residue Asn-453 participates in NAD(+) binding. Residues Asn-500 and Tyr-660 each coordinate substrate.

This sequence in the N-terminal section; belongs to the enoyl-CoA hydratase/isomerase family. In the C-terminal section; belongs to the 3-hydroxyacyl-CoA dehydrogenase family. As to quaternary structure, heterotetramer of two alpha chains (FadB) and two beta chains (FadA).

The enzyme catalyses a (3S)-3-hydroxyacyl-CoA + NAD(+) = a 3-oxoacyl-CoA + NADH + H(+). It carries out the reaction a (3S)-3-hydroxyacyl-CoA = a (2E)-enoyl-CoA + H2O. It catalyses the reaction a 4-saturated-(3S)-3-hydroxyacyl-CoA = a (3E)-enoyl-CoA + H2O. The catalysed reaction is (3S)-3-hydroxybutanoyl-CoA = (3R)-3-hydroxybutanoyl-CoA. The enzyme catalyses a (3Z)-enoyl-CoA = a 4-saturated (2E)-enoyl-CoA. It carries out the reaction a (3E)-enoyl-CoA = a 4-saturated (2E)-enoyl-CoA. The protein operates within lipid metabolism; fatty acid beta-oxidation. Functionally, involved in the aerobic and anaerobic degradation of long-chain fatty acids via beta-oxidation cycle. Catalyzes the formation of 3-oxoacyl-CoA from enoyl-CoA via L-3-hydroxyacyl-CoA. It can also use D-3-hydroxyacyl-CoA and cis-3-enoyl-CoA as substrate. The polypeptide is Fatty acid oxidation complex subunit alpha (Pectobacterium atrosepticum (strain SCRI 1043 / ATCC BAA-672) (Erwinia carotovora subsp. atroseptica)).